A 528-amino-acid polypeptide reads, in one-letter code: GMP synthase [glutamine-hydrolyzing] (528 aa).

Residues 13–204 enclose the Glutamine amidotransferase type-1 domain; the sequence is AIVILDFGSQ…VYHICGCEPD (192 aa). Cysteine 90 serves as the catalytic Nucleophile. Residues histidine 178 and glutamate 180 contribute to the active site. Positions 205 to 403 constitute a GMPS ATP-PPase domain; sequence WTTEAFIDEA…LGLPEEIVSR (199 aa). 232–238 is a binding site for ATP; the sequence is SGGVDSS.

Homodimer.

It carries out the reaction XMP + L-glutamine + ATP + H2O = GMP + L-glutamate + AMP + diphosphate + 2 H(+). Its pathway is purine metabolism; GMP biosynthesis; GMP from XMP (L-Gln route): step 1/1. Its function is as follows. Catalyzes the synthesis of GMP from XMP. The polypeptide is GMP synthase [glutamine-hydrolyzing] (Synechococcus sp. (strain CC9311)).